The following is a 127-amino-acid chain: MPVTAMCLQDSKKLKKAKLTRKKVTPFPFSRMVLCLSLVFTLYVEATNARCLRPRSKELLCGSELVDILQFICGPTGFYVSKGASFRNRNRPGIVEECCFCGCSVAILESYCAAPVTNFTGREEQKS.

The signal sequence occupies residues 1–49 (MPVTAMCLQDSKKLKKAKLTRKKVTPFPFSRMVLCLSLVFTLYVEATNA). Residues 49–80 (ARCLRPRSKELLCGSELVDILQFICGPTGFYV) form a b region. 3 cysteine pairs are disulfide-bonded: Cys61–Cys99, Cys73–Cys112, and Cys98–Cys103. The c stretch occupies residues 81–92 (SKGASFRNRNRP). The a stretch occupies residues 93-113 (GIVEECCFCGCSVAILESYCA). The d stretch occupies residues 114 to 121 (APVTNFTG). A propeptide spans 122-127 (REEQKS) (e peptide).

This sequence belongs to the insulin family.

It is found in the secreted. In terms of biological role, the insulin-like growth factors, isolated from plasma, are structurally and functionally related to insulin but have a much higher growth-promoting activity. Promotes anterior neural development. The polypeptide is Insulin-like growth factor 3.L (Xenopus laevis (African clawed frog)).